The following is a 390-amino-acid chain: Protein dimmed (390 aa).

The tract at residues 24-163 (HNNNNYNTDG…RNMRRLESNE (140 aa)) is disordered. Composition is skewed to polar residues over residues 29–44 (YNTD…SAEG) and 55–64 (RTSQLSNNTY). An N-linked (GlcNAc...) asparagine glycan is attached at asparagine 61. The span at 69–78 (TDSSSQSDDT) shows a compositional bias: low complexity. Positions 79-90 (SGGGGSSNGGGS) are enriched in gly residues. The span at 122–141 (PSTIAPNSTSSNSSNANGNA) shows a compositional bias: low complexity. 3 N-linked (GlcNAc...) asparagine glycosylation sites follow: asparagine 128, asparagine 133, and asparagine 140. The span at 151–163 (AKERNMRRLESNE) shows a compositional bias: basic and acidic residues. Positions 156–208 (MRRLESNERERMRMHSLNDAFQSLREVIPHVEMERRLSKIETLTLAKNYIINL) constitute a bHLH domain. Asparagine 207 and asparagine 237 each carry an N-linked (GlcNAc...) asparagine glycan. A disordered region spans residues 312–339 (QQQQASHLPHHQQAMHGHGHLGASIQSQ). The N-linked (GlcNAc...) asparagine glycan is linked to asparagine 347.

Forms homodimers via the bHLH domain. These dimers bind the core E-box sequence. In terms of tissue distribution, detected in the developing nervous system in the bilateral domains in the cephalic region that later on forms part of the ring gland. Concomitantly expressed in the larval central nervous system (CNS), including the dorsal chain neurons as well as several bilateral clusters of neurons: large, midline protocerebral brain cells (MC), lateral protocerebral brain cells (LC), ventral subesophageal neurons (SE) and lateral abdominal neurons, and the transverse nerves. Outside the CNS, detected in at least three classes of endocrine cells: intrinsic cells of the corpora cardiaca, midgut cells, the Inka cells, lateral Bipolar neurons associated with the segmental transverse nerve, and several peptidergic cells of the enteric nervous system. Expressed only in central and peripheral neuroendocrine secretory cells and neurosecretory neurons but not in sensory or motor neurons.

Its subcellular location is the cytoplasm. Transcription factor that regulates neurosecretory (NS) cell function and neuroendocrine cell fate. Acts as a master regulator of common NS functions such as Phm expression and neuropeptide production. Plays a role as a regulator of peptide-containing large dense-core vesicle (LDCV) production and peptidergic cell differentiation. Controls transcription of FMRFamide in Tv neuronal cells and Fur1 in Ap-let cells (Tvb and dorsal apterous cells). Also required for up-regulation of Phm in Tv and Ap-let cells, and expression of three neuropeptide genes, Ms, FMRFamide and Lk. Influences both regulated and constitutive secretory activity in neuroendocrine cells at embryonic and postembryonic level. Loss of function studies show reduced cellular levels of various neuropeptides and neuropeptide biosynthetic enzymes. This Drosophila melanogaster (Fruit fly) protein is Protein dimmed (dimm).